The sequence spans 95 residues: Alpha-bungarotoxin isoform V31 (95 aa).

The first 21 residues, 1-21 (MKTLLLTLVVVTIVCLDLGYT), serve as a signal peptide directing secretion. 5 cysteine pairs are disulfide-bonded: Cys24–Cys44, Cys37–Cys65, Cys50–Cys54, Cys69–Cys80, and Cys81–Cys86.

Belongs to the three-finger toxin family. Long-chain subfamily. Type II alpha-neurotoxin sub-subfamily. Monomer in solution, homodimer in crystal state. In terms of tissue distribution, expressed by the venom gland.

The protein resides in the secreted. Binds with high affinity to muscular (alpha-1/CHRNA1) and neuronal (alpha-7/CHRNA7) nicotinic acetylcholine receptor (nAChR) and inhibits acetylcholine from binding to the receptor, thereby impairing neuromuscular and neuronal transmission. The protein is Alpha-bungarotoxin isoform V31 of Bungarus multicinctus (Many-banded krait).